Reading from the N-terminus, the 441-residue chain is Xylose isomerase (441 aa).

Residues histidine 99 and aspartate 102 contribute to the active site. Mn(2+) is bound by residues glutamate 230, glutamate 266, aspartate 294, aspartate 305, aspartate 307, and aspartate 337.

Belongs to the xylose isomerase family. Homotetramer. It depends on Mn(2+) as a cofactor.

The protein localises to the cytoplasm. It carries out the reaction alpha-D-xylose = alpha-D-xylulofuranose. In Geobacillus stearothermophilus (Bacillus stearothermophilus), this protein is Xylose isomerase (xylA).